A 138-amino-acid chain; its full sequence is MIKSKGDVNILLNFRHNINGEDLIIAVAQDHETGEVLMVAYMNREALRRTLETGTAHYWSTSRGKLWLKGESSGHVQRVKDVLVDCDGDAVVLKVEQEGGACHTGYRSCFYRSIDGDELKVREDAVKVFDPEEIYGDG.

Position 85 (Asp-85) interacts with Mg(2+). Cys-86 provides a ligand contact to Zn(2+). Mg(2+) contacts are provided by Asp-87 and Asp-89. Zn(2+)-binding residues include Cys-102 and Cys-109.

It belongs to the PRA-CH family. In terms of assembly, homodimer. It depends on Mg(2+) as a cofactor. Requires Zn(2+) as cofactor.

It localises to the cytoplasm. The enzyme catalyses 1-(5-phospho-beta-D-ribosyl)-5'-AMP + H2O = 1-(5-phospho-beta-D-ribosyl)-5-[(5-phospho-beta-D-ribosylamino)methylideneamino]imidazole-4-carboxamide. The protein operates within amino-acid biosynthesis; L-histidine biosynthesis; L-histidine from 5-phospho-alpha-D-ribose 1-diphosphate: step 3/9. Its function is as follows. Catalyzes the hydrolysis of the adenine ring of phosphoribosyl-AMP. The sequence is that of Phosphoribosyl-AMP cyclohydrolase from Methanothermobacter thermautotrophicus (strain ATCC 29096 / DSM 1053 / JCM 10044 / NBRC 100330 / Delta H) (Methanobacterium thermoautotrophicum).